The chain runs to 101 residues: Small ribosomal subunit protein uS14A (101 aa).

2 disordered regions span residues 1 to 20 (MAKK…VARY) and 28 to 72 (TEII…RPRG). 2 stretches are compositionally biased toward basic and acidic residues: residues 38-53 (EAER…RQPR) and 61-70 (RNRDSVDGRP).

This sequence belongs to the universal ribosomal protein uS14 family. In terms of assembly, part of the 30S ribosomal subunit. Contacts proteins S3 and S10.

Binds 16S rRNA, required for the assembly of 30S particles and may also be responsible for determining the conformation of the 16S rRNA at the A site. This chain is Small ribosomal subunit protein uS14A, found in Streptomyces avermitilis (strain ATCC 31267 / DSM 46492 / JCM 5070 / NBRC 14893 / NCIMB 12804 / NRRL 8165 / MA-4680).